A 159-amino-acid chain; its full sequence is Transcriptional repressor NrdR (159 aa).

The segment at 3–34 (CPKCGYNKSSVVDSRQAEEGTTIRRRRECEKC) is a zinc-finger region. The ATP-cone domain maps to 49-139 (LLVIKKDGTR…VYKSFKDVDE (91 aa)).

Belongs to the NrdR family. Zn(2+) is required as a cofactor.

Negatively regulates transcription of bacterial ribonucleotide reductase nrd genes and operons by binding to NrdR-boxes. In Streptococcus agalactiae serotype Ia (strain ATCC 27591 / A909 / CDC SS700), this protein is Transcriptional repressor NrdR.